Here is a 341-residue protein sequence, read N- to C-terminus: UDP-3-O-acylglucosamine N-acyltransferase (341 aa).

Residue H239 is the Proton acceptor of the active site.

It belongs to the transferase hexapeptide repeat family. LpxD subfamily. As to quaternary structure, homotrimer.

The catalysed reaction is a UDP-3-O-[(3R)-3-hydroxyacyl]-alpha-D-glucosamine + a (3R)-hydroxyacyl-[ACP] = a UDP-2-N,3-O-bis[(3R)-3-hydroxyacyl]-alpha-D-glucosamine + holo-[ACP] + H(+). It participates in bacterial outer membrane biogenesis; LPS lipid A biosynthesis. In terms of biological role, catalyzes the N-acylation of UDP-3-O-acylglucosamine using 3-hydroxyacyl-ACP as the acyl donor. Is involved in the biosynthesis of lipid A, a phosphorylated glycolipid that anchors the lipopolysaccharide to the outer membrane of the cell. In Shewanella sp. (strain MR-7), this protein is UDP-3-O-acylglucosamine N-acyltransferase.